The sequence spans 210 residues: Somatotropin-2 (210 aa).

Residues 1-22 (MGQVFLLMPVLLVSCFLSQGAA) form the signal peptide. Position 38 (His-38) interacts with Zn(2+). Cys-71 and Cys-183 form a disulfide bridge. Glu-192 provides a ligand contact to Zn(2+). A disulfide bond links Cys-200 and Cys-208.

The protein belongs to the somatotropin/prolactin family.

It localises to the secreted. Growth hormone plays an important role in growth control and is involved in the regulation of several anabolic processes. Implicated as an osmoregulatory substance important for seawater adaptation. The protein is Somatotropin-2 (gh2) of Oncorhynchus nerka (Sockeye salmon).